Consider the following 238-residue polypeptide: Histone deacetylase 7 (238 aa).

Disordered stretches follow at residues 1–26 and 47–72; these read TPGS…PEPA and QQQR…GQQE. Residues 58 to 158 are interaction with MEF2A; sequence SMDPPLPELQ…LPTEPPEHFP (101 aa). 2 positions are modified to phosphoserine: serine 118 and serine 164. The segment at 145 to 238 is disordered; that stretch reads PVPSLPTEPP…NPALGSEADG (94 aa). The segment covering 176–190 has biased composition (basic and acidic residues); the sequence is KSLERRKNPLLRKES. Phosphoserine; by PKD/PRKD2 is present on serine 190. Low complexity predominate over residues 206–221; that stretch reads SSPSSSSTPASGCSSP.

Belongs to the histone deacetylase family. HD type 2 subfamily. In terms of assembly, interacts with HDAC1, HDAC2, HDAC3, HDAC4, HDAC5, NCOR1, NCOR2, SIN3A, SIN3B, RBBP4, RBBP7, MTA1L1, SAP30 and MBD3. Interacts with KAT5 and EDNRA. Interacts with the 14-3-3 protein YWHAE, MEF2A, MEF2B and MEF2C. Interacts with ZMYND15. Interacts with KDM5B. Interacts with PML. Interacts with FOXP3. Interacts with RARA. May be phosphorylated by CaMK1. Phosphorylated by the PKC kinases PKN1 and PKN2, impairing nuclear import. Phosphorylation at Ser-164 by MARK2, MARK3 and PRKD1 promotes interaction with 14-3-3 proteins and export from the nucleus. Phosphorylation at Ser-164 is a prerequisite for phosphorylation at Ser-190.

It is found in the nucleus. The protein localises to the cytoplasm. The catalysed reaction is N(6)-acetyl-L-lysyl-[histone] + H2O = L-lysyl-[histone] + acetate. The enzyme catalyses N(6)-acetyl-L-lysyl-[protein] + H2O = L-lysyl-[protein] + acetate. Its function is as follows. Responsible for the deacetylation of lysine residues on the N-terminal part of the core histones (H2A, H2B, H3 and H4). Histone deacetylation gives a tag for epigenetic repression and plays an important role in transcriptional regulation, cell cycle progression and developmental events. Histone deacetylases act via the formation of large multiprotein complexes. Involved in muscle maturation by repressing transcription of myocyte enhancer factors such as MEF2A, MEF2B and MEF2C. During muscle differentiation, it shuttles into the cytoplasm, allowing the expression of myocyte enhancer factors. May be involved in Epstein-Barr virus (EBV) latency, possibly by repressing the viral BZLF1 gene. Positively regulates the transcriptional repressor activity of FOXP3. Serves as a corepressor of RARA, causing its deacetylation and inhibition of RARE DNA element binding. In association with RARA, plays a role in the repression of microRNA-10a and thereby in the inflammatory response. Also acetylates non-histone proteins, such as ALKBH5. This chain is Histone deacetylase 7 (Hdac7), found in Rattus norvegicus (Rat).